The chain runs to 471 residues: MSIQIFNTLKREKQPFKPLKDGEVKMYVCGPTVYNYIHIGNARPIIVFDTVRRYFTYRGYDVKFVSNFTDVDDKLIRAANELKLTVPEVADRFIGAYFDDVDQLNVAKASVNPRVTENMDEIIQMISTLIEKGYAYESAGDVYFQTKKFKDYGKLSGQELSELQHGARVEYNERKQDELDFTLWKAAKPGEIFWESPFGNGRPGWHIECSALAKKYLGDTIDIHAGGQDLVFPHHEDEIAQSEAATGKTFANYWMHNAFLNIDGEKMSKSLGNFITLHDVLKDNDPNVIRFFMLSVHYRKPITLNDAILEDAKNGLERLMIAYQNIDHRIQTDDGEYVEEAHEDEWLEQLTELKQAFEDDMDDDFNTANAITTFHELAKRANIYLAKETVSINVLREFLSMMRLFAEVLGLKLENTQTDSLDDSEVEALIEERLQARNERNFARADEIRDILKEKNIILEDTAQGTRFRRG.

Cys29 contacts Zn(2+). The short motif at Pro31 to Asn41 is the 'HIGH' region element. Positions 209, 234, and 238 each coordinate Zn(2+). A 'KMSKS' region motif is present at residues Lys266 to Ser270. Lys269 serves as a coordination point for ATP.

Belongs to the class-I aminoacyl-tRNA synthetase family. As to quaternary structure, monomer. Requires Zn(2+) as cofactor.

It localises to the cytoplasm. It catalyses the reaction tRNA(Cys) + L-cysteine + ATP = L-cysteinyl-tRNA(Cys) + AMP + diphosphate. The protein is Cysteine--tRNA ligase of Listeria monocytogenes serovar 1/2a (strain ATCC BAA-679 / EGD-e).